Here is a 171-residue protein sequence, read N- to C-terminus: 3-hydroxydecanoyl-[acyl-carrier-protein] dehydratase (171 aa).

The active site involves H70.

Belongs to the thioester dehydratase family. FabA subfamily. Homodimer.

The protein localises to the cytoplasm. The enzyme catalyses a (3R)-hydroxyacyl-[ACP] = a (2E)-enoyl-[ACP] + H2O. It carries out the reaction (3R)-hydroxydecanoyl-[ACP] = (2E)-decenoyl-[ACP] + H2O. It catalyses the reaction (2E)-decenoyl-[ACP] = (3Z)-decenoyl-[ACP]. Its pathway is lipid metabolism; fatty acid biosynthesis. Its function is as follows. Necessary for the introduction of cis unsaturation into fatty acids. Catalyzes the dehydration of (3R)-3-hydroxydecanoyl-ACP to E-(2)-decenoyl-ACP and then its isomerization to Z-(3)-decenoyl-ACP. Can catalyze the dehydratase reaction for beta-hydroxyacyl-ACPs with saturated chain lengths up to 16:0, being most active on intermediate chain length. The polypeptide is 3-hydroxydecanoyl-[acyl-carrier-protein] dehydratase (Pseudomonas aeruginosa (strain LESB58)).